The following is a 353-amino-acid chain: Biotin synthase (353 aa).

In terms of domain architecture, Radical SAM core spans 51–270; it reads NEVQCNQLLN…IALARIMMPK (220 aa). [4Fe-4S] cluster contacts are provided by Cys66, Cys70, and Cys73. The [2Fe-2S] cluster site is built by Cys110, Cys141, Cys201, and Arg274. Residues 330-353 form a disordered region; sequence APVEAHSHDHDHDHHDHHHGHSHS. The span at 334–343 shows a compositional bias: basic and acidic residues; the sequence is AHSHDHDHDH. Residues 344–353 are compositionally biased toward basic residues; sequence HDHHHGHSHS.

The protein belongs to the radical SAM superfamily. Biotin synthase family. In terms of assembly, homodimer. [4Fe-4S] cluster is required as a cofactor. Requires [2Fe-2S] cluster as cofactor.

The catalysed reaction is (4R,5S)-dethiobiotin + (sulfur carrier)-SH + 2 reduced [2Fe-2S]-[ferredoxin] + 2 S-adenosyl-L-methionine = (sulfur carrier)-H + biotin + 2 5'-deoxyadenosine + 2 L-methionine + 2 oxidized [2Fe-2S]-[ferredoxin]. Its pathway is cofactor biosynthesis; biotin biosynthesis; biotin from 7,8-diaminononanoate: step 2/2. Functionally, catalyzes the conversion of dethiobiotin (DTB) to biotin by the insertion of a sulfur atom into dethiobiotin via a radical-based mechanism. The protein is Biotin synthase of Rhodopseudomonas palustris (strain HaA2).